The chain runs to 184 residues: MKVIAVTGYKPFELGIFKNDHPGVECIKKALRRKLTAFVEDGLEWVIISGQLGVELWAAEVVFEIQVEYPDLKLAVFTPFLEQEEGWKEDNREYYEFILSQADHVDSITKRKYESPEQFKLKNQFFIEKSDALLAVYDEEKPGSPKYIVEAAKKKGEIENYHSYFILFSDLQDIIEEEQWNNAE.

The protein belongs to the UPF0398 family.

The sequence is that of UPF0398 protein BALH_1408 from Bacillus thuringiensis (strain Al Hakam).